Here is a 247-residue protein sequence, read N- to C-terminus: Eukaryotic translation initiation factor 6-1 (247 aa).

It belongs to the eIF-6 family. In terms of assembly, monomer. Associates with the 60S ribosomal subunit.

It is found in the cytoplasm. It localises to the nucleus. Its subcellular location is the nucleolus. In terms of biological role, binds to the 60S ribosomal subunit and prevents its association with the 40S ribosomal subunit to form the 80S initiation complex in the cytoplasm. May also be involved in ribosome biogenesis. The polypeptide is Eukaryotic translation initiation factor 6-1 (Arabidopsis thaliana (Mouse-ear cress)).